The primary structure comprises 193 residues: Probable chemoreceptor glutamine deamidase CheD 1 (193 aa).

Residues 1 to 26 (MPHTPPAYPAASADHRPPSSPPAEPA) are disordered.

Belongs to the CheD family.

It carries out the reaction L-glutaminyl-[protein] + H2O = L-glutamyl-[protein] + NH4(+). Probably deamidates glutamine residues to glutamate on methyl-accepting chemotaxis receptors (MCPs), playing an important role in chemotaxis. The protein is Probable chemoreceptor glutamine deamidase CheD 1 of Chromobacterium violaceum (strain ATCC 12472 / DSM 30191 / JCM 1249 / CCUG 213 / NBRC 12614 / NCIMB 9131 / NCTC 9757 / MK).